Consider the following 366-residue polypeptide: tRNA/tmRNA (uracil-C(5))-methyltransferase (366 aa).

S-adenosyl-L-methionine is bound by residues Gln-190, Tyr-218, Asn-223, Glu-239, and Asp-299. Cys-324 serves as the catalytic Nucleophile. The active-site Proton acceptor is the Glu-358.

The protein belongs to the class I-like SAM-binding methyltransferase superfamily. RNA M5U methyltransferase family. TrmA subfamily.

The enzyme catalyses uridine(54) in tRNA + S-adenosyl-L-methionine = 5-methyluridine(54) in tRNA + S-adenosyl-L-homocysteine + H(+). It carries out the reaction uridine(341) in tmRNA + S-adenosyl-L-methionine = 5-methyluridine(341) in tmRNA + S-adenosyl-L-homocysteine + H(+). Dual-specificity methyltransferase that catalyzes the formation of 5-methyluridine at position 54 (m5U54) in all tRNAs, and that of position 341 (m5U341) in tmRNA (transfer-mRNA). The chain is tRNA/tmRNA (uracil-C(5))-methyltransferase from Shigella dysenteriae serotype 1 (strain Sd197).